A 344-amino-acid polypeptide reads, in one-letter code: Ribosomal RNA large subunit methyltransferase Cfr (344 aa).

E88 serves as the catalytic Proton acceptor. The 230-residue stretch at K95–R324 folds into the Radical SAM core domain. An intrachain disulfide couples C102 to C335. [4Fe-4S] cluster-binding residues include C109, C113, and C116. Residues G155–E156, S186, S209–H211, and N290 each bind S-adenosyl-L-methionine. The S-methylcysteine intermediate role is filled by C335.

Belongs to the radical SAM superfamily. RlmN family. Cfr subfamily. [4Fe-4S] cluster is required as a cofactor.

The protein localises to the cytoplasm. It carries out the reaction adenosine(2503) in 23S rRNA + 2 reduced [2Fe-2S]-[ferredoxin] + 2 S-adenosyl-L-methionine = 8-methyladenosine(2503) in 23S rRNA + 5'-deoxyadenosine + L-methionine + 2 oxidized [2Fe-2S]-[ferredoxin] + S-adenosyl-L-homocysteine. Its function is as follows. Specifically methylates position 8 of adenine 2503 in 23S rRNA. Confers resistance to some classes of antibiotics. The sequence is that of Ribosomal RNA large subunit methyltransferase Cfr from Lachnoclostridium phytofermentans (strain ATCC 700394 / DSM 18823 / ISDg) (Clostridium phytofermentans).